A 196-amino-acid chain; its full sequence is uncharacterized protein (196 aa).

This sequence to H.influenzae HI_0431.

This is an uncharacterized protein from Salmonella typhi.